Here is a 279-residue protein sequence, read N- to C-terminus: Pantothenate synthetase (279 aa).

31-38 (MGNLHGGH) provides a ligand contact to ATP. Histidine 38 functions as the Proton donor in the catalytic mechanism. Glutamine 62 is a (R)-pantoate binding site. Glutamine 62 is a binding site for beta-alanine. 150–153 (GRKD) contacts ATP. Glutamine 156 contacts (R)-pantoate. ATP contacts are provided by residues valine 179 and 187–190 (KSSR).

Belongs to the pantothenate synthetase family. In terms of assembly, homodimer.

The protein localises to the cytoplasm. The enzyme catalyses (R)-pantoate + beta-alanine + ATP = (R)-pantothenate + AMP + diphosphate + H(+). Its pathway is cofactor biosynthesis; (R)-pantothenate biosynthesis; (R)-pantothenate from (R)-pantoate and beta-alanine: step 1/1. Its function is as follows. Catalyzes the condensation of pantoate with beta-alanine in an ATP-dependent reaction via a pantoyl-adenylate intermediate. The protein is Pantothenate synthetase of Stenotrophomonas maltophilia (strain R551-3).